An 896-amino-acid polypeptide reads, in one-letter code: Protein bride of sevenless (896 aa).

A signal peptide spans 1–31; the sequence is MKVMDALQSGRRKPLPVALLCILVTVFCVLE. The Extracellular segment spans residues 32-530; it reads CHGADLTSPT…MFWRIKMDTW (499 aa). The interval 38–84 is disordered; it reads TSPTKKSAPLRITKPQPTSQQAKPISITTRAPTTVASTTDDEVSSSV. The span at 52 to 64 shows a compositional bias: polar residues; it reads PQPTSQQAKPISI. Over residues 65 to 84 the composition is skewed to low complexity; the sequence is TTRAPTTVASTTDDEVSSSV. N-linked (GlcNAc...) asparagine glycans are attached at residues asparagine 183, asparagine 307, asparagine 474, and asparagine 485. 7 helical membrane-spanning segments follow: residues 531 to 554, 570 to 588, 615 to 637, 655 to 676, 693 to 712, 728 to 748, and 759 to 781; these read VATG…FIVV, ILLL…PYSI, VFIM…VMLA, AVIC…LVVM, WLWG…GALI, IVIG…LSLF, and LGLQ…FLIV. The Cytoplasmic portion of the chain corresponds to 782–896; sequence RGIERSDIAQ…SPDHNKITRF (115 aa). 2 disordered regions span residues 825 to 844 and 861 to 896; these read SQDE…PLRG and ANIN…ITRF. The segment covering 874–884 has biased composition (low complexity); that stretch reads QSPSRSSVSSL.

This sequence belongs to the G-protein coupled receptor 3 family. As to expression, expressed exclusively by R8 photoreceptor cells and is internalized in a sev-dependent manner by R7 cells.

The protein localises to the cell membrane. Functionally, acts as a ligand for sevenless tyrosine-kinase receptor during eye development. In Drosophila melanogaster (Fruit fly), this protein is Protein bride of sevenless (boss).